The following is a 536-amino-acid chain: Glycine-rich extracellular protein 1 (536 aa).

The N-terminal stretch at 1-22 is a signal peptide; the sequence is MGAWAFPAALFLLCLTSESLQG. Disordered stretches follow at residues 111–134, 306–336, and 500–536; these read AQNG…TTQN, GAGE…NGPW, and GDEY…LGKC. Residues 115 to 124 are compositionally biased toward gly residues; sequence FGPGFGGGGK. The span at 521–536 shows a compositional bias: gly residues; it reads GQLGNGYGGRCPLGKC.

The polypeptide is Glycine-rich extracellular protein 1 (Homo sapiens (Human)).